A 295-amino-acid polypeptide reads, in one-letter code: N-acetylmuramic acid 6-phosphate etherase (295 aa).

Positions 54–217 (VIASFRQGGR…STASMIGIGK (164 aa)) constitute an SIS domain. Residue Glu-82 is the Proton donor of the active site. The active site involves Glu-113.

It belongs to the GCKR-like family. MurNAc-6-P etherase subfamily. In terms of assembly, homodimer.

The catalysed reaction is N-acetyl-D-muramate 6-phosphate + H2O = N-acetyl-D-glucosamine 6-phosphate + (R)-lactate. The protein operates within amino-sugar metabolism; N-acetylmuramate degradation. Its function is as follows. Specifically catalyzes the cleavage of the D-lactyl ether substituent of MurNAc 6-phosphate, producing GlcNAc 6-phosphate and D-lactate. This is N-acetylmuramic acid 6-phosphate etherase from Geobacillus sp. (strain WCH70).